We begin with the raw amino-acid sequence, 895 residues long: Stonin-2 (895 aa).

Disordered regions lie at residues 10–101 (THQS…AISN), 144–204 (ASES…METI), and 236–279 (NEVG…PKST). Over residues 64–73 (SHSEQDDSSE) the composition is skewed to basic and acidic residues. Composition is skewed to polar residues over residues 145-169 (SESS…TDLQ) and 179-193 (GRAS…SSSL). Phosphoserine is present on residues serine 278, serine 284, and serine 299. 2 disordered regions span residues 291–326 (ISSL…SPIN) and 386–424 (QIDD…PRDG). Short sequence motifs (NPF) lie at residues 310 to 312 (NPF) and 326 to 328 (NPF). Over residues 311-323 (PFLNESLQDIQPS) the composition is skewed to polar residues. Residues 424–557 (GWPMMLRIPE…DLPVQSMDLS (134 aa)) form the SHD domain. In terms of domain architecture, MHD spans 565-872 (EEEITVDIRD…AHYSYKVEIE (308 aa)). Position 759 is a phosphoserine (serine 759).

It belongs to the Stoned B family. Interacts with the second C2 domain of synaptotagmins SYT1 and SYT2. Interacts with EPS15, EPS15R and ITSN1. Interacts indirectly with the AP-2 adapter complex. Interacts with TOR1A and COPS4; the interaction controls STON2 protein stability. Post-translationally, phosphorylated in vitro by PKD. In terms of processing, neddylated and ubiquitinated; leading to its degradation and inhibited by TOR1A and COPS4.

The protein resides in the synapse. It is found in the synaptosome. The protein localises to the cytoplasm. It localises to the membrane. Functionally, adapter protein involved in endocytic machinery. Involved in the synaptic vesicle recycling. May facilitate clathrin-coated vesicle uncoating. This chain is Stonin-2 (Ston2), found in Rattus norvegicus (Rat).